Consider the following 241-residue polypeptide: Small ribosomal subunit protein uS2 (241 aa).

This sequence belongs to the universal ribosomal protein uS2 family.

The polypeptide is Small ribosomal subunit protein uS2 (Salmonella agona (strain SL483)).